Here is a 122-residue protein sequence, read N- to C-terminus: Large ribosomal subunit protein uL14 (122 aa).

The protein belongs to the universal ribosomal protein uL14 family. In terms of assembly, part of the 50S ribosomal subunit. Forms a cluster with proteins L3 and L19. In the 70S ribosome, L14 and L19 interact and together make contacts with the 16S rRNA in bridges B5 and B8.

Its function is as follows. Binds to 23S rRNA. Forms part of two intersubunit bridges in the 70S ribosome. The polypeptide is Large ribosomal subunit protein uL14 (Acidiphilium cryptum (strain JF-5)).